Here is a 338-residue protein sequence, read N- to C-terminus: Cap-specific mRNA (nucleoside-2'-O-)-methyltransferase (338 aa).

Position 22 (tyrosine 22) interacts with mRNA. S-adenosyl-L-methionine is bound by residues glutamine 39, tyrosine 66, glycine 68, glycine 72, aspartate 95, arginine 97, valine 116, and aspartate 138. Positions 169–249 (PAASSLKWRC…NKIIRNRIII (81 aa)) are binding to NPH-I. The binding to Rap94 stretch occupies residues 169–333 (PAASSLKWRC…NTKKSVRGNK (165 aa)). The active-site For methyltransferase activity is lysine 175. Residues 177-180 (RCPF), aspartate 182, 205-207 (SAE), and glutamate 233 each bind mRNA. The tract at residues 305–338 (HHEPTQRKVPSKNTMLKSRNTKKSVRGNKQGRRT) is disordered. Residues 323 to 338 (RNTKKSVRGNKQGRRT) are compositionally biased toward basic residues.

It belongs to the class I-like SAM-binding methyltransferase superfamily. Poxvirus/kinetoplastid 2'-O-MTase family. In terms of assembly, interacts with poly(A) polymerase catalytic subunit OPG063. Interacts with OPG109 and OPG123; these interactions might help linking transcription to capping and polyadenylation.

The protein localises to the virion. It carries out the reaction a 5'-end (N(7)-methyl 5'-triphosphoguanosine)-ribonucleoside in mRNA + S-adenosyl-L-methionine = a 5'-end (N(7)-methyl 5'-triphosphoguanosine)-(2'-O-methyl-ribonucleoside) in mRNA + S-adenosyl-L-homocysteine + H(+). Its function is as follows. Displays methyltransferase, positive regulation of the poly(A) polymerase and transcription elongation activities. Involved in the modification of both mRNA ends and in intermediate and late gene positive transcription elongation. At the mRNAs 5' end, methylates the ribose 2' OH group of the first transcribed nucleotide, thereby producing a 2'-O-methylpurine cap. At the 3' end, functions as a processivity factor which stimulates the activity of the viral poly(A) polymerase OPG063 that creates mRNA's poly(A) tail. In the presence of OPG102, OPG063 does not dissociate from the RNA allowing tail elongation to around 250 adenylates. The sequence is that of Cap-specific mRNA (nucleoside-2'-O-)-methyltransferase (OPG102) from Oryctolagus cuniculus (Rabbit).